Consider the following 271-residue polypeptide: Type II restriction enzyme ScrFI (271 aa).

The catalysed reaction is Endonucleolytic cleavage of DNA to give specific double-stranded fragments with terminal 5'-phosphates.. Its function is as follows. A P subtype restriction enzyme that recognizes the double-stranded sequence 5'-CCNGG-3' and cleaves after C-2. The protein is Type II restriction enzyme ScrFI of Lactococcus lactis subsp. cremoris (Streptococcus cremoris).